Reading from the N-terminus, the 60-residue chain is Potassium channel toxin alpha-KTx 29.1 (60 aa).

Residues 1–28 (MKSVCGVLIILVVLTTMLSISTFSTVGA) form the signal peptide. Disulfide bonds link cysteine 32/cysteine 51, cysteine 40/cysteine 56, and cysteine 44/cysteine 58.

Belongs to the short scorpion toxin superfamily. Potassium channel inhibitor family. Alpha-KTx 29 subfamily. Expressed by the venom gland.

Its subcellular location is the secreted. Functionally, weakly inhibits the Kv1.3/KCNA3 channel (1 uM of the toxin inhibits currents by 13.2%) and Kv7.1/KCNQ1 channel (10 uM of the toxin inhibits currents by 27.7%). The polypeptide is Potassium channel toxin alpha-KTx 29.1 (Lychas mucronatus (Chinese swimming scorpion)).